A 336-amino-acid chain; its full sequence is UPF0324 membrane protein BT_1919 (336 aa).

A run of 8 helical transmembrane segments spans residues 2–19, 23–45, 85–107, 117–134, 147–169, 210–232, 253–275, and 310–332; these read LHGVLLIALFSCAAFYIG, FVRSISFSPMIVGIILGMLYANS, IGLPAMLIDVIIVAVTICGGIYL, IALLTSIGSGICGAAAIL, TAVSVSTVVIFGTISMFLYPFLY, AIIVKMIRVMMLVPVLLITTYLV, WFAIGFMGVIAFNSFDLLPAQLV, and FVLALLLYVWLVVGGYFLVKYLT.

This sequence belongs to the UPF0324 family.

The protein resides in the cell membrane. The sequence is that of UPF0324 membrane protein BT_1919 from Bacteroides thetaiotaomicron (strain ATCC 29148 / DSM 2079 / JCM 5827 / CCUG 10774 / NCTC 10582 / VPI-5482 / E50).